The primary structure comprises 337 residues: GTPase Obg (337 aa).

An Obg domain is found at 1 to 159 (MKFVDSATIS…FELEMELKLM (159 aa)). The OBG-type G domain occupies 160 to 322 (ADVGLVGFPN…LKDELWRQVS (163 aa)). Residues 166 to 173 (GFPNAGKS), 191 to 195 (FTTLV), 213 to 216 (DIPG), 280 to 283 (TKMD), and 303 to 305 (SSV) each bind GTP. 2 residues coordinate Mg(2+): Ser-173 and Thr-193.

The protein belongs to the TRAFAC class OBG-HflX-like GTPase superfamily. OBG GTPase family. As to quaternary structure, monomer. The cofactor is Mg(2+).

The protein localises to the cytoplasm. Functionally, an essential GTPase which binds GTP, GDP and possibly (p)ppGpp with moderate affinity, with high nucleotide exchange rates and a fairly low GTP hydrolysis rate. Plays a role in control of the cell cycle, stress response, ribosome biogenesis and in those bacteria that undergo differentiation, in morphogenesis control. The sequence is that of GTPase Obg from Chlorobium phaeobacteroides (strain DSM 266 / SMG 266 / 2430).